Here is a 122-residue protein sequence, read N- to C-terminus: Ribonuclease P protein component (122 aa).

Belongs to the RnpA family. Consists of a catalytic RNA component (M1 or rnpB) and a protein subunit.

It catalyses the reaction Endonucleolytic cleavage of RNA, removing 5'-extranucleotides from tRNA precursor.. Functionally, RNaseP catalyzes the removal of the 5'-leader sequence from pre-tRNA to produce the mature 5'-terminus. It can also cleave other RNA substrates such as 4.5S RNA. The protein component plays an auxiliary but essential role in vivo by binding to the 5'-leader sequence and broadening the substrate specificity of the ribozyme. This is Ribonuclease P protein component from Synechococcus elongatus (strain ATCC 33912 / PCC 7942 / FACHB-805) (Anacystis nidulans R2).